The sequence spans 194 residues: Cysteine and glycine-rich protein 3 (194 aa).

Residues 1 to 5 (MPNWG) form an interaction with TCAP region. Residues 10–61 (CGACEKTVYHAEEIQCNGRSFHKTCFHCMACRKALDSTTVAAHESEIYCKVC) form the LIM zinc-binding 1 domain. The Nuclear localization signal motif lies at 64–69 (RRYGPK). The segment at 94–105 (QSPKPARSVTTS) is interaction with CLF2 and isoform 2. A phosphoserine mark is found at serine 95 and serine 153. Positions 120–171 (CPRCGKSVYAAEKVMGGGKPWHKTCFRCAICGKSLESTNVTDKDGELYCKVC) constitute an LIM zinc-binding 2 domain.

Self-associates. Oligomeric in the cytoplasm and monomeric in the nucleus. Homooligomers preferentially form along the actin cytoskeleton. Isoform 2 interacts with isoform 1. Isoform 1 but not isoform 2 interacts with MYOD1 and MYOG. Isoform 1 interacts with TCAP, ACTN2 and NRAP. Isoform 2 interacts with TCAP and alpha-actinin. Interacts with LDHD. Interacts (via N-terminus)with GLRX3 (via C-terminus) and PPP3CA; GLRX3 and calcineurin compete for interaction with CSRP3. Interacts with MYF6. Interacts with CFL2; the stoichiometry influences F-actin depolymerization and possibly two molecules of CFL2 can interact with one molecule of CSRP3 resulting in the highest functional impact; the interaction is stronger with phosphorylated CFL2. Phosphorylated by PKC/PRKCA. In terms of tissue distribution, cardiac and slow-twitch skeletal muscles. Isoform 2 is expressed in striated muscle. Isoform 2 is specifically expressed at higher levels in patients with neuromuscular diseases, such as limb-girdle muscular dystrophy 2A (LGMD2A), Duchenne muscular dystrophy (DMD) and dermatomyositis.

It localises to the nucleus. The protein resides in the cytoplasm. The protein localises to the cytoskeleton. It is found in the myofibril. Its subcellular location is the sarcomere. It localises to the z line. In terms of biological role, positive regulator of myogenesis. Acts as a cofactor for myogenic bHLH transcription factors such as MYOD1, and probably MYOG and MYF6. Enhances the DNA-binding activity of the MYOD1:TCF3 isoform E47 complex and may promote formation of a functional MYOD1:TCF3 isoform E47:MEF2A complex involved in myogenesis. Plays a crucial and specific role in the organization of cytosolic structures in cardiomyocytes. Could play a role in mechanical stretch sensing. May be a scaffold protein that promotes the assembly of interacting proteins at Z-line structures. It is essential for calcineurin anchorage to the Z line. Required for stress-induced calcineurin-NFAT activation. The role in regulation of cytoskeleton dynamics by association with CFL2 is reported conflictingly: Shown to enhance CFL2-mediated F-actin depolymerization dependent on the CSRP3:CFL2 molecular ratio, and also shown to reduce the ability of CLF1 and CFL2 to enhance actin depolymerization. Proposed to contribute to the maintenance of muscle cell integrity through an actin-based mechanism. Can directly bind to actin filaments, cross-link actin filaments into bundles without polarity selectivity and protect them from dilution- and cofilin-mediated depolymerization; the function seems to involve its self-association. In vitro can inhibit PKC/PRKCA activity. Proposed to be involved in cardiac stress signaling by down-regulating excessive PKC/PRKCA signaling. Functionally, may play a role in early sarcomere organization. Overexpression in myotubes negatively regulates myotube differentiation. By association with isoform 1 and thus changing the CSRP3 isoform 1:CFL2 stoichiometry is proposed to down-regulate CFL2-mediated F-actin depolymerization. The sequence is that of Cysteine and glycine-rich protein 3 (CSRP3) from Homo sapiens (Human).